The primary structure comprises 215 residues: Large ribosomal subunit protein uL4 (215 aa).

The tract at residues 46–72 (TAKSKNRAEVSGGGRKPWAQKGGGRAR) is disordered. Gly residues predominate over residues 56–71 (SGGGRKPWAQKGGGRA).

Belongs to the universal ribosomal protein uL4 family. In terms of assembly, part of the 50S ribosomal subunit.

Functionally, one of the primary rRNA binding proteins, this protein initially binds near the 5'-end of the 23S rRNA. It is important during the early stages of 50S assembly. It makes multiple contacts with different domains of the 23S rRNA in the assembled 50S subunit and ribosome. Its function is as follows. Forms part of the polypeptide exit tunnel. This Helicobacter pylori (strain G27) protein is Large ribosomal subunit protein uL4.